Consider the following 190-residue polypeptide: Threonylcarbamoyl-AMP synthase (190 aa).

The 184-residue stretch at 7 to 190 (TGSSAAVVDL…ALTGELFRQG (184 aa)) folds into the YrdC-like domain.

Belongs to the SUA5 family. TsaC subfamily.

The protein localises to the cytoplasm. The enzyme catalyses L-threonine + hydrogencarbonate + ATP = L-threonylcarbamoyladenylate + diphosphate + H2O. Required for the formation of a threonylcarbamoyl group on adenosine at position 37 (t(6)A37) in tRNAs that read codons beginning with adenine. Catalyzes the conversion of L-threonine, HCO(3)(-)/CO(2) and ATP to give threonylcarbamoyl-AMP (TC-AMP) as the acyladenylate intermediate, with the release of diphosphate. In Salmonella typhi, this protein is Threonylcarbamoyl-AMP synthase.